Consider the following 368-residue polypeptide: Endophilin-A2 (368 aa).

Residues Met1 to Val21 form a membrane-binding amphipathic helix region. Positions Ser18–Ser249 constitute a BAR domain. The tract at residues Pro60–Pro87 is required for dimerization upon membrane association. Positions Asp180–Arg250 form a coiled coil. The segment at Leu218 to Glu254 is interaction with ARC. A disordered region spans residues Arg243–Pro309. Basic and acidic residues predominate over residues Arg245–Glu261. Phosphoserine is present on Ser288. Thr298 carries the phosphothreonine modification. Positions Leu306–Pro365 constitute an SH3 domain. Tyr315 is modified (phosphotyrosine).

It belongs to the endophilin family. In terms of assembly, interacts with ARC, SYNJ1 and DNM1. Interacts with PDCD6IP. Interacts with BIN2. Detected in brain and testis (at protein level). Ubiquitous.

The protein localises to the cytoplasm. It localises to the early endosome membrane. The protein resides in the cell projection. Its subcellular location is the podosome. In terms of biological role, implicated in endocytosis. May recruit other proteins to membranes with high curvature. This is Endophilin-A2 (Sh3gl1) from Rattus norvegicus (Rat).